The primary structure comprises 450 residues: UPF0210 protein CPE1497 (450 aa).

The protein belongs to the UPF0210 family. Homodimer.

The chain is UPF0210 protein CPE1497 from Clostridium perfringens (strain 13 / Type A).